Consider the following 59-residue polypeptide: Large ribosomal subunit protein uL30 (59 aa).

It belongs to the universal ribosomal protein uL30 family. As to quaternary structure, part of the 50S ribosomal subunit.

The protein is Large ribosomal subunit protein uL30 of Ectopseudomonas mendocina (strain ymp) (Pseudomonas mendocina).